Consider the following 99-residue polypeptide: Cell cycle protein GpsB (99 aa).

Residues 34–71 are a coiled coil; sequence LDMIIKDYETFHQEIEELQQENLQLKKQLEEASKKQPV.

Belongs to the GpsB family. In terms of assembly, forms polymers through the coiled coil domains. Interacts with PBP1, MreC and EzrA.

It is found in the cytoplasm. In terms of biological role, divisome component that associates with the complex late in its assembly, after the Z-ring is formed, and is dependent on DivIC and PBP2B for its recruitment to the divisome. Together with EzrA, is a key component of the system that regulates PBP1 localization during cell cycle progression. Its main role could be the removal of PBP1 from the cell pole after pole maturation is completed. Also contributes to the recruitment of PBP1 to the division complex. Not essential for septum formation. This Bacillus velezensis (strain DSM 23117 / BGSC 10A6 / LMG 26770 / FZB42) (Bacillus amyloliquefaciens subsp. plantarum) protein is Cell cycle protein GpsB.